The chain runs to 142 residues: Universal stress protein C (142 aa).

The protein belongs to the universal stress protein A family.

The protein resides in the cytoplasm. In terms of biological role, required for resistance to DNA-damaging agents. The polypeptide is Universal stress protein C (uspC) (Escherichia coli O6:H1 (strain CFT073 / ATCC 700928 / UPEC)).